We begin with the raw amino-acid sequence, 469 residues long: ATP synthase subunit beta (469 aa).

An ATP-binding site is contributed by 153–160; the sequence is GGAGVGKT.

This sequence belongs to the ATPase alpha/beta chains family. In terms of assembly, F-type ATPases have 2 components, CF(1) - the catalytic core - and CF(0) - the membrane proton channel. CF(1) has five subunits: alpha(3), beta(3), gamma(1), delta(1), epsilon(1). CF(0) has three main subunits: a(1), b(2) and c(9-12). The alpha and beta chains form an alternating ring which encloses part of the gamma chain. CF(1) is attached to CF(0) by a central stalk formed by the gamma and epsilon chains, while a peripheral stalk is formed by the delta and b chains.

The protein resides in the cell membrane. It carries out the reaction ATP + H2O + 4 H(+)(in) = ADP + phosphate + 5 H(+)(out). Its function is as follows. Produces ATP from ADP in the presence of a proton gradient across the membrane. The catalytic sites are hosted primarily by the beta subunits. The protein is ATP synthase subunit beta of Pediococcus pentosaceus (strain ATCC 25745 / CCUG 21536 / LMG 10740 / 183-1w).